Consider the following 758-residue polypeptide: Polyribonucleotide nucleotidyltransferase (758 aa).

Mg(2+) contacts are provided by D488 and D494. The KH domain occupies P555–I614. The S1 motif domain maps to G624–R692. The segment at R692–A758 is disordered. Residues P707–A735 are compositionally biased toward basic and acidic residues. The segment covering G736–Q745 has biased composition (low complexity).

It belongs to the polyribonucleotide nucleotidyltransferase family. Requires Mg(2+) as cofactor.

It is found in the cytoplasm. It catalyses the reaction RNA(n+1) + phosphate = RNA(n) + a ribonucleoside 5'-diphosphate. In terms of biological role, involved in mRNA degradation. Catalyzes the phosphorolysis of single-stranded polyribonucleotides processively in the 3'- to 5'-direction. The protein is Polyribonucleotide nucleotidyltransferase of Paracidovorax citrulli (strain AAC00-1) (Acidovorax citrulli).